Here is a 743-residue protein sequence, read N- to C-terminus: TSL-kinase interacting protein 1 (743 aa).

In terms of domain architecture, SANT spans 53–104; the sequence is RQWAAWTHQEEESFFTALRQVGKNFEKITSRVQSKNKDQVRHYYYRLVRRMN. Disordered regions lie at residues 486 to 523 and 626 to 679; these read SGVH…PGEW and SPKG…TPCG. A compositionally biased stretch (basic and acidic residues) spans 488 to 499; the sequence is VHDRPARSRDDY.

As to quaternary structure, interacts only with active kinase forms of TOUSLED. Interacts with SNL1. Phosphorylated in vitro by TOUSLED. As to expression, expressed in flowers, roots and leaves.

It localises to the nucleus. This is TSL-kinase interacting protein 1 (TKI1) from Arabidopsis thaliana (Mouse-ear cress).